The primary structure comprises 743 residues: TSL-kinase interacting protein 1 (743 aa).

One can recognise an SANT domain in the interval 53-104 (RQWAAWTHQEEESFFTALRQVGKNFEKITSRVQSKNKDQVRHYYYRLVRRMN). Disordered stretches follow at residues 486–523 (SGVH…PGEW) and 626–679 (SPKG…TPCG). Residues 488 to 499 (VHDRPARSRDDY) show a composition bias toward basic and acidic residues.

In terms of assembly, interacts only with active kinase forms of TOUSLED. Interacts with SNL1. Phosphorylated in vitro by TOUSLED. In terms of tissue distribution, expressed in flowers, roots and leaves.

The protein localises to the nucleus. In Arabidopsis thaliana (Mouse-ear cress), this protein is TSL-kinase interacting protein 1 (TKI1).